We begin with the raw amino-acid sequence, 73 residues long: Protein DSS1 HOMOLOG ON CHROMOSOME V (73 aa).

This sequence belongs to the DSS1/SEM1 family. In terms of assembly, part of the 26S proteasome. Interacts with BRCA2B. Interacts with EER5. Interacts with UCH1 and UCH2.

Functionally, subunit of the 26S proteasome which plays a role in ubiquitin-dependent proteolysis. Also associates with the TREX-2 complex that is required for transcription-coupled mRNA export. This Arabidopsis thaliana (Mouse-ear cress) protein is Protein DSS1 HOMOLOG ON CHROMOSOME V.